We begin with the raw amino-acid sequence, 693 residues long: Protein arginine N-methyltransferase 7 (693 aa).

SAM-dependent MTase PRMT-type domains are found at residues 14–345 (SLEW…YCVW) and 358–684 (SAYQ…ITME). Position 32 is an omega-N-methylarginine (arginine 32). Residues glutamate 144 and glutamate 153 contribute to the active site.

Belongs to the class I-like SAM-binding methyltransferase superfamily. Protein arginine N-methyltransferase family. PRMT7 subfamily. In terms of assembly, homodimer and heterodimer. Interacts with CTCFL, PRMT5 and SNRPD3.

It localises to the cytoplasm. Its subcellular location is the cytosol. The protein resides in the nucleus. The catalysed reaction is L-arginyl-[protein] + S-adenosyl-L-methionine = N(omega)-methyl-L-arginyl-[protein] + S-adenosyl-L-homocysteine + H(+). Arginine methyltransferase that can both catalyze the formation of omega-N monomethylarginine (MMA) and symmetrical dimethylarginine (sDMA), with a preference for the formation of MMA. Specifically mediates the symmetrical dimethylation of arginine residues in the small nuclear ribonucleoproteins Sm D1 (SNRPD1) and Sm D3 (SNRPD3); such methylation being required for the assembly and biogenesis of snRNP core particles. Specifically mediates the symmetric dimethylation of histone H4 'Arg-3' to form H4R3me2s. Plays a role in gene imprinting by being recruited by CTCFL at the H19 imprinted control region (ICR) and methylating histone H4 to form H4R3me2s, possibly leading to recruit DNA methyltransferases at these sites. May also play a role in embryonic stem cell (ESC) pluripotency. Also able to mediate the arginine methylation of histone H2A and myelin basic protein (MBP) in vitro; the relevance of such results is however unclear in vivo. The sequence is that of Protein arginine N-methyltransferase 7 (Prmt7) from Rattus norvegicus (Rat).